A 1043-amino-acid polypeptide reads, in one-letter code: Liprin-alpha-4 (1043 aa).

Coiled-coil stretches lie at residues 24-332 (EKVR…GRGG) and 426-470 (ILDA…RVTS). The segment at 498 to 617 (SASPPLSGRS…AKRKGIKSSI (120 aa)) is disordered. Ser500 bears the Phosphoserine mark. The segment covering 505 to 516 (GRSTPKLTSRSA) has biased composition (polar residues). Residue Ser541 is modified to Phosphoserine. Over residues 544–555 (SREENREDKATI) the composition is skewed to basic and acidic residues. Low complexity predominate over residues 590 to 602 (QDSNPSSSNSSQD). 3 consecutive SAM domains span residues 688–754 (WDGP…MVSL), 803–867 (NHEW…LKRL), and 891–960 (WTND…LLAL). Residues 864–890 (LKRLNYDRKELEKRREESQHEIKDVLV) adopt a coiled-coil conformation.

The protein belongs to the liprin family. Liprin-alpha subfamily. As to quaternary structure, forms homodimers and heterodimers with liprins-alpha and liprins-beta. Interacts with the second PTPase domain of PTPRD, PTPRF and PTPRS. Interacts with RIMS1 and RIMS2. Interacts with GIT1 and GIT2. Interacts with GRIP1. Interacts with KIF1A.

It is found in the cytoplasm. The protein localises to the cell surface. May regulate the disassembly of focal adhesions. May localize receptor-like tyrosine phosphatases type 2A at specific sites on the plasma membrane, possibly regulating their interaction with the extracellular environment and their association with substrates. In Rattus norvegicus (Rat), this protein is Liprin-alpha-4 (Ppfia4).